The following is a 275-amino-acid chain: MQNITDSWFVQGMIKATSDAWLKGWDERNGGNLTLRLDETDIAPFAANFHEKPRYIALSQPMPLLTNTPFIVTGSGKFFRNVQLDPAANLGVVKIDSDGAGYHILWGLTHDAVPTSELPAHFLSHCERIKATHGKDRVIMHCHATNLIALTYVLENNTALITRKLWEGSTECLVVFPDGVGILPWMVPGTDEIGQATAQEMQKHSLVLWPFHGVFGSGPTLDETFGLIDTAEKSAEVLVKIYSMGGMKQTITREELVALGKRFGVTPLASAVALY.

Glu-117 is a catalytic residue. Zn(2+) is bound by residues His-141, His-143, and His-212.

The protein belongs to the aldolase class II family. RhaD subfamily. Homotetramer. Zn(2+) is required as a cofactor.

It localises to the cytoplasm. It carries out the reaction L-rhamnulose 1-phosphate = (S)-lactaldehyde + dihydroxyacetone phosphate. Its pathway is carbohydrate degradation; L-rhamnose degradation; glycerone phosphate from L-rhamnose: step 3/3. Its function is as follows. Catalyzes the reversible cleavage of L-rhamnulose-1-phosphate to dihydroxyacetone phosphate (DHAP) and L-lactaldehyde. In Salmonella paratyphi C (strain RKS4594), this protein is Rhamnulose-1-phosphate aldolase.